Reading from the N-terminus, the 185-residue chain is Threonylcarbamoyl-AMP synthase (185 aa).

The region spanning 4–185 (SWRVQQAAQN…IATGQVMRAG (182 aa)) is the YrdC-like domain.

The protein belongs to the SUA5 family. TsaC subfamily.

The protein localises to the cytoplasm. It carries out the reaction L-threonine + hydrogencarbonate + ATP = L-threonylcarbamoyladenylate + diphosphate + H2O. Its function is as follows. Required for the formation of a threonylcarbamoyl group on adenosine at position 37 (t(6)A37) in tRNAs that read codons beginning with adenine. Catalyzes the conversion of L-threonine, HCO(3)(-)/CO(2) and ATP to give threonylcarbamoyl-AMP (TC-AMP) as the acyladenylate intermediate, with the release of diphosphate. This is Threonylcarbamoyl-AMP synthase from Pseudomonas syringae pv. tomato (strain ATCC BAA-871 / DC3000).